The chain runs to 348 residues: Dihydroorotase (348 aa).

Residues histidine 17 and histidine 19 each coordinate Zn(2+). Residues 19–21 (HLR) and asparagine 45 each bind substrate. Zn(2+)-binding residues include lysine 103, histidine 140, and histidine 178. Lysine 103 is subject to N6-carboxylysine. Residue histidine 140 coordinates substrate. Substrate is bound at residue leucine 223. Aspartate 251 is a Zn(2+) binding site. The active site involves aspartate 251. The substrate site is built by histidine 255 and alanine 267.

It belongs to the metallo-dependent hydrolases superfamily. DHOase family. Class II DHOase subfamily. In terms of assembly, homodimer. Requires Zn(2+) as cofactor.

It catalyses the reaction (S)-dihydroorotate + H2O = N-carbamoyl-L-aspartate + H(+). It participates in pyrimidine metabolism; UMP biosynthesis via de novo pathway; (S)-dihydroorotate from bicarbonate: step 3/3. Functionally, catalyzes the reversible cyclization of carbamoyl aspartate to dihydroorotate. In Salmonella heidelberg (strain SL476), this protein is Dihydroorotase.